A 611-amino-acid chain; its full sequence is Aspartate--tRNA(Asp/Asn) ligase (611 aa).

L-aspartate is bound at residue Glu-174. The segment at 198-201 (QLFK) is aspartate. Arg-220 contributes to the L-aspartate binding site. ATP is bound by residues 220 to 222 (RDE) and Gln-229. His-467 provides a ligand contact to L-aspartate. Position 501 (Glu-501) interacts with ATP. Residue Arg-508 coordinates L-aspartate. ATP is bound at residue 553 to 556 (GLDR).

Belongs to the class-II aminoacyl-tRNA synthetase family. Type 1 subfamily. Homodimer.

The protein resides in the cytoplasm. It catalyses the reaction tRNA(Asx) + L-aspartate + ATP = L-aspartyl-tRNA(Asx) + AMP + diphosphate. Aspartyl-tRNA synthetase with relaxed tRNA specificity since it is able to aspartylate not only its cognate tRNA(Asp) but also tRNA(Asn). Reaction proceeds in two steps: L-aspartate is first activated by ATP to form Asp-AMP and then transferred to the acceptor end of tRNA(Asp/Asn). The protein is Aspartate--tRNA(Asp/Asn) ligase of Albidiferax ferrireducens (strain ATCC BAA-621 / DSM 15236 / T118) (Rhodoferax ferrireducens).